A 459-amino-acid polypeptide reads, in one-letter code: Ribulose bisphosphate carboxylase large chain (459 aa).

Lys-4 bears the N6,N6,N6-trimethyllysine mark. Residues Asn-113 and Thr-163 each contribute to the substrate site. Lys-165 (proton acceptor) is an active-site residue. Substrate is bound at residue Lys-167. The Mg(2+) site is built by Lys-191, Asp-193, and Glu-194. N6-carboxylysine is present on Lys-191. His-284 serves as the catalytic Proton acceptor. Arg-285, His-317, and Ser-369 together coordinate substrate.

This sequence belongs to the RuBisCO large chain family. Type I subfamily. As to quaternary structure, heterohexadecamer of 8 large chains and 8 small chains; disulfide-linked. The disulfide link is formed within the large subunit homodimers. It depends on Mg(2+) as a cofactor. The disulfide bond which can form in the large chain dimeric partners within the hexadecamer appears to be associated with oxidative stress and protein turnover.

It is found in the plastid. Its subcellular location is the chloroplast. It carries out the reaction 2 (2R)-3-phosphoglycerate + 2 H(+) = D-ribulose 1,5-bisphosphate + CO2 + H2O. The catalysed reaction is D-ribulose 1,5-bisphosphate + O2 = 2-phosphoglycolate + (2R)-3-phosphoglycerate + 2 H(+). In terms of biological role, ruBisCO catalyzes two reactions: the carboxylation of D-ribulose 1,5-bisphosphate, the primary event in carbon dioxide fixation, as well as the oxidative fragmentation of the pentose substrate in the photorespiration process. Both reactions occur simultaneously and in competition at the same active site. The protein is Ribulose bisphosphate carboxylase large chain of Garrya elliptica (Wavyleaf silktassel).